The sequence spans 214 residues: Cell division protein SepF (214 aa).

The interval 23-70 is disordered; that stretch reads YYDDRAPSRGFPRPRFDDGYGRYDGDDYDDPRREPADCPPPAGYRGGY. Residues 36–58 show a composition bias toward basic and acidic residues; it reads PRFDDGYGRYDGDDYDDPRREPA.

The protein belongs to the SepF family. Homodimer. Interacts with FtsZ.

Its subcellular location is the cytoplasm. In terms of biological role, cell division protein that is part of the divisome complex and is recruited early to the Z-ring. Probably stimulates Z-ring formation, perhaps through the cross-linking of FtsZ protofilaments. Its function overlaps with FtsA. This chain is Cell division protein SepF, found in Mycolicibacterium paratuberculosis (strain ATCC BAA-968 / K-10) (Mycobacterium paratuberculosis).